Reading from the N-terminus, the 277-residue chain is NADPH-dependent 7-cyano-7-deazaguanine reductase (277 aa).

83-85 provides a ligand contact to substrate; the sequence is VES. 85–86 provides a ligand contact to NADPH; it reads SK. Catalysis depends on C184, which acts as the Thioimide intermediate. The active-site Proton donor is D191. 223-224 serves as a coordination point for substrate; the sequence is HE. 252-253 contacts NADPH; that stretch reads RG.

The protein belongs to the GTP cyclohydrolase I family. QueF type 2 subfamily. In terms of assembly, homodimer.

Its subcellular location is the cytoplasm. It catalyses the reaction 7-aminomethyl-7-carbaguanine + 2 NADP(+) = 7-cyano-7-deazaguanine + 2 NADPH + 3 H(+). Its pathway is tRNA modification; tRNA-queuosine biosynthesis. Functionally, catalyzes the NADPH-dependent reduction of 7-cyano-7-deazaguanine (preQ0) to 7-aminomethyl-7-deazaguanine (preQ1). The sequence is that of NADPH-dependent 7-cyano-7-deazaguanine reductase from Ralstonia nicotianae (strain ATCC BAA-1114 / GMI1000) (Ralstonia solanacearum).